We begin with the raw amino-acid sequence, 199 residues long: Inner membrane-spanning protein YciB (199 aa).

6 helical membrane passes run 7–27, 32–52, 56–76, 93–113, 126–146, and 153–173; these read HPLFKLATELGPLLVFFAANA, FVATAAFMVAIVAAMIASYVV, IPLMALVTGIVVIVFGTLTLV, LFAGVLGGGLLFGRSFIAIMF, VLTLRWALFFFGMAILNELIW, and FWVNFKVFGAVPLTMIFAMMQ.

Belongs to the YciB family.

The protein resides in the cell inner membrane. In terms of biological role, plays a role in cell envelope biogenesis, maintenance of cell envelope integrity and membrane homeostasis. The protein is Inner membrane-spanning protein YciB of Nitrobacter hamburgensis (strain DSM 10229 / NCIMB 13809 / X14).